The chain runs to 217 residues: uncharacterized protein (217 aa).

This is an uncharacterized protein from Haemophilus influenzae (strain ATCC 51907 / DSM 11121 / KW20 / Rd).